The following is a 1452-amino-acid chain: ABC multidrug transporter A-1 (1452 aa).

The disordered stretch occupies residues 1-20 (MNESHEAGKNSSTNVEEREE). N-linked (GlcNAc...) asparagine glycosylation is found at asparagine 2, asparagine 10, asparagine 228, asparagine 287, and asparagine 311. Positions 110-363 (LKTLSLARIA…FLQMGFVCPD (254 aa)) constitute an ABC transporter 1 domain. Helical transmembrane passes span 474 to 494 (VTISSLFGNTIISLVIASIFY), 508 to 528 (ALLFFAVLMNALGCGLEMLTL), 554 to 574 (MIMDLPYKILNAITSNIVLYF), 583 to 603 (GAFFFFVFTSFILTLTMSMFF), 616 to 636 (VLPFSAVLLLGLSMYTGFAIP), and 725 to 745 (IGVIFAYMFLLGAVYLVATDF). An ABC transporter 2 domain is found at 802–1044 (FQWKDVCFDI…ILIDYFVRNG (243 aa)). Residue 838–845 (GVSGAGKT) participates in ATP binding. 6 consecutive transmembrane segments (helical) span residues 1153–1173 (ALCVLSALFVGFSLFHTPNTI), 1183–1203 (IFMLLTLFGQLIQQIMPHFVA), 1223–1243 (FLIANIVVELPWNSLMSVLMF), 1271–1291 (LMIWTFLLFSSTFAHFMIAAF), 1297–1317 (AGNLGNLLFLLCLLFCGVLAT), and 1324–1344 (FWIFMYRVSPFTYLVSGMLSV). N-linked (GlcNAc...) asparagine glycans are attached at residues asparagine 1350, asparagine 1365, and asparagine 1391. The helical transmembrane segment at 1418 to 1438 (FGLMWVFIVFNIFAACSLYWW) threads the bilayer.

Belongs to the ABC transporter superfamily. ABCG family. PDR (TC 3.A.1.205) subfamily.

The protein localises to the membrane. ABC transporter that seems not to be involved in the efflux of toxic substances, at least not the classical compounds such as itraconazole, amphotericin B, voriconazole, posaconazole, ravuconazole, or echinocandins. This is ABC multidrug transporter A-1 from Aspergillus fumigatus (strain ATCC MYA-4609 / CBS 101355 / FGSC A1100 / Af293) (Neosartorya fumigata).